We begin with the raw amino-acid sequence, 257 residues long: Electron transfer flavoprotein subunit beta (257 aa).

The protein belongs to the ETF beta-subunit/FixA family. As to quaternary structure, heterodimer of an alpha and a beta subunit. Requires FAD as cofactor. AMP serves as cofactor.

Its function is as follows. The electron transfer flavoprotein serves as a specific electron acceptor for other dehydrogenases. It transfers the electrons to the main respiratory chain via ETF-ubiquinone oxidoreductase (ETF dehydrogenase). The protein is Electron transfer flavoprotein subunit beta (etfB) of Bacillus subtilis (strain 168).